The following is a 182-amino-acid chain: NADH-quinone oxidoreductase subunit I (182 aa).

4Fe-4S ferredoxin-type domains lie at 50–82 (IILS…LQKA) and 92–121 (EFFR…MTPD). [4Fe-4S] cluster is bound by residues Cys-62, Cys-65, Cys-68, Cys-72, Cys-101, Cys-104, Cys-107, and Cys-111.

It belongs to the complex I 23 kDa subunit family. NDH-1 is composed of 14 different subunits. Subunits NuoA, H, J, K, L, M, N constitute the membrane sector of the complex. Requires [4Fe-4S] cluster as cofactor.

It localises to the cell inner membrane. The catalysed reaction is a quinone + NADH + 5 H(+)(in) = a quinol + NAD(+) + 4 H(+)(out). NDH-1 shuttles electrons from NADH, via FMN and iron-sulfur (Fe-S) centers, to quinones in the respiratory chain. The immediate electron acceptor for the enzyme in this species is believed to be ubiquinone. Couples the redox reaction to proton translocation (for every two electrons transferred, four hydrogen ions are translocated across the cytoplasmic membrane), and thus conserves the redox energy in a proton gradient. The sequence is that of NADH-quinone oxidoreductase subunit I from Psychrobacter cryohalolentis (strain ATCC BAA-1226 / DSM 17306 / VKM B-2378 / K5).